The following is a 3855-amino-acid chain: MSGTFSRCMCTPAARVFWNAGQVFCTRCLSARSLLSPELQDTDLGAVGLFYKPRDKLHWKVPIGIPQVECTPSGCCWLSAVFPLARMTSGNHNFLQRLVKVADVLYRDGCLAPRHLRELQVYERGCNWYPITGPVPGMGLFANSMHVSDQPFPGATHVLTNSPLPQQACRQPFCPFEEAHSSVYRWKKFVVFTDSSLNGRSRMMWTPESDDSAALEVLPPELERQVEILIRSFPAHHPVDLADWELTESPENGFSFNTSHSCGHLVQNPDVFDGKCWLSCFLGQSVEVRCHEEHLADAFGYQTKWGVHGKYLQRRLQVRGIRAVVDPDGPIHVEALSCPQSWIRHLTLDDDVTPGFVRLTSLRIVPNTEPTTSRIFRFGAHKWYGAAGKRARAKRAAKSEKDSAPTPKVALPVPTCGITTYSPPTDGSCGWHVLAAIMNRMINGDFTSPLTQYNRPEDDWASDYDLVQAIQCLRLPATVVRNRACPNAKYLIKLNGVHWEVEVRSGMAPRSLSRECVVGVCSEGCVAPPYPADGLPKRALEALASAYRLPSDCVSSGIADFLANPPPQEFWTLDKMLTSPSPERSGFSSLYKLLLEVVPQKCGATEGAFIYAVERMLKDCPSSKQAMALLAKIKVPSSKAPSVSLDECFPTDVLADFEPASQERPQSSGAAVVLCSPDAKEFEEAAPEEVQESGHKAVHSALLAEGPNNEQVQVVAGEQLKLGGCGLAVGNAHEGALVSAGLINLVGGNLSPSDPMKENMLNSREDEPLDLSQPAPASTTTLVREQTPDNPGSDAGALPVTVREFVPTGPILCHVEHCGTESGDSSSPLDLSDAQTLDQPLNLSLAAWPVRATASDPGWVHGRREPVFVKPRNAFSDGDSALQFGELSESSSVIEFDRTKDAPVVDAPVDLTTSNEALSVVDPFEFAELKRPRFSAQALIDRGGPLADVHAKIKNRVYEQCLQACEPGSRATPATREWLDKMWDRVDMKTWRCTSQFQAGRILASLKFLPDMIQDTPPPVPRKNRASDNAGLKQLVAQWDRKLSVTPPPKPVGPVLDQIVPPPTDIQQEDVTPSDGPPHAPDFPSRVSTGGSWKGLMLSGTRLAGSISQRLMTWVFEVFSHLPAFMLTLFSPRGSMAPGDWLFAGVVLLALLLCRSYPILGCLPLLGVFSGSLRRVRLGVFGSWMAFAVFLFSTPSNPVGSSCDHDSPECHAELLALEQRQLWEPVRGLVVGPSGLLCVILGKLLGGSRYLWHVLLRLCMLADLALSLVYVVSQGRCHKCWGKCIRTAPAEVALNVFPFSRATRVSLVSLCDRFQTPKGVDPVHLATGWRGCWRGESPIHQPHQKPIAYANLDEKKMSAQTVVAVPYDPSQAIKCLKVLQAGGAIVDQPTPEVVRVSEIPFSAPFFPKVPVNPDCRVVVDSDTFVAAVRCGYSTAQLVLGRGNFAKLNQTPPRNSISTKTTGGASYTLAVAQVSAWTLVHFILGLWFTSPQVCGRGTADPWCSNPFSYPTYGPGVVCSSRLCVSADGVTLPLFSAVAQLSGREVGIFILVLVSLTALAHRMALKADMLVVFSAFCAYAWPMSSWLICFFPILLKWVTLHPLTMLWVHSFLVFCLPAAGILSLGITGLLWAIGRFTQVAGIITPYDIHQYTSGPRGAAAVATAPEGTYMAAVRRAALTGRTLIFTPSAVGSLLEGAFRTHKPCLNTVNVVGSSLGSGGVFTIDGRRTVVTAAHVLNGDTARVTGDSYNRMHTFKTNGDYAWSHADDWQGVAPVVKVAKGYRGRAYWQTSTGVEPGIIGEGFAFCFTNCGDSGSPVISESGDLIGIHTGSNKLGSGLVTTPEGETCTIKETKLSDLSRHFAGPSVPLGDIKLSPAIIPDVTSIPSDLASLLASVPVVEGGLSTVQLLCVFFLLWRMMGHAWTPIVAVGFFLLNEILPAVLVRAVFSFALFVLAWATPWSAQVLMIRLLTASLNRNKLSLAFYALGGVVGLAAEIGTFAGRLSELSQALSTYCFLPRVLAMTSCVPTIIIGGLHTLGVILWLFKYRCLHNMLVGDGSFSSAFFLRYFAEGNLRKGVSQSCGMNNESLTAALACKLSQADLDFLSSLTNFKCFVSASNMKNAAGQYIEAAYAKALRQELASLVQIDKMKGVLSKLEAFAETATPSLDIGDVIVLLGQHPHGSILDINVGTERKTVSVQETRSLGGSKFSVCTVVSNTPVDALTGIPLQTPTPLFENGPRHRSEEDDLKVERMKKHCVSLGFHNINGKVYCKIWDKSTGDTFYTDDSRYTQDHAFQDRSADYRDRDYEGVQTTPQQGFDPKSETPVGTVVIGGITYNRYLIKGKEVLVPKPDNCLEAAKLSLEQALAGMGQTCDLTAAEVEKLKRIISQLQGLTTEQALNCLLAASGLTRCGRGGLVVTETAVKIIKYHSRTFTLGPLDLKVTSEVEVKKSTEQGHAVVANLCSGVILMRPHPPSLVDVLLKPGLDTIPGIQPGHGAGNMGVDGSIWDFETAPTKAELELSKQIIQACEVRRGDAPNLQLPYKLYPVRGDPERHKGRLINTRFGDLPYKTPQDTKSAIHAACCLHPNGAPVSDGKSTLGTTLQHGFELYVPTVPYSVMEYLDSRPDTPFMCTKHGTSKAAAEDLQKYDLSTQGFVLPGVLRLVRRFIFGHIGKAPPLFLPSTYPAKNSMAGINGQRFPTKDVQSIPEIDEMCARAVKENWQTVTPCTLKKQYCSKPKTRTILGTNNFIALAHRSALSGVTQAFMKKAWKSPIALGKNKFKELHCTVAGRCLEADLASCDRSTPAIVRWFVANLLYELAGCEEYLPSYVLNCCHDLVATQDGAFTKRGGLSSGDPVTSVSNTVYSLVIYAQHMVLSALKMGHEIGLKFLEEQLKFEDLLEIQPMLVYSDDLVLYAERPTFPNYHWWVEHLDLMLGFRTDPKKTVITDKPSFLGCRIEAGRQLVPNRDRILAALAYHMKAQNASEYYASAAAILMDSCACIDHDPEWYEDLICGIARCARQDGYSFPGPAFFMSMWEKLRSHNEGKKFRHCGICDAKADYASACGLDLCLFHSHFHQHCPVTLSCGHHAGSKECSQCQSPVGAGRSPLDAVLKQIPYKPPRTVIMKVGNKTTALDPGRYQSRRGLVAVKRGIAGNEVDLSDGDYQVVPLLPTCKDINMVKVACNVLLSKFIVGPPGSGKTTWLLSQVQDDDVIYTPTHQTMFDIVSALKVCRYSIPGASGLPFPPPARSGPWVRLIASGHVPGRVSYLDEAGYCNHLDILRLLSKTPLVCLGDLQQLHPVGFDSYCYVFDQMPQKQLTTIYRFGPNICAAIQPCYREKLESKARNTRVVFTTRPVAFGQVLTPYHKDRIGSAITIDSSQGATFDIVTLHLPSPKSLNKSRALVAITRARHGLFIYDPHNQLQEFFNLTPERTDCNLVFSRGDELVVLNADNAVTTVAKALETGPSRFRVSDPRCKSLLAACSASLEGSCMPLPQVAHNLGFYFSPDSPTFAPLPKELAPHWPVVTHQNNRAWPDRLVASMRPIDARYSKPMVGAGYVVGPSTFLGTPGVVSYYLTLYIRGEPQALPETLVSTGRIATDCREYLDAAEEEAAKELPHAFIGDVKGTTVGGCHHITSKYLPRSLPKDSVAVVGVSSPGRAAKAVCTLTDVYLPELRPYLQPETASKCWKLKLDFRDVRLMVWKGATAYFQLEGLTWSALPDYARFIQLPKDAVVYIDPCIGPATANRKVVRTTDWRADLAVTPYDYGAQNILTTAWFEDLGPQWKILGLQPFRRAFGFENTEDWAILARRMNDGKDYTDYNWNCVRERPHAIYGRARDHTYHFAPGTELQVELGKPRLPPGQVP.

The segment at 8–28 (CMCTPAARVFWNAGQVFCTRC) adopts a C4-type; atypical zinc-finger fold. Positions 69–180 (ECTPSGCCWL…QPFCPFEEAH (112 aa)) constitute a Peptidase C31 domain. Positions 69 to 182 (ECTPSGCCWL…FCPFEEAHSS (114 aa)) are PCP1-alpha. Residues Cys76 and His146 each act as for nsp1-alpha papain-like cysteine proteinase activity in the active site. The tract at residues 203-204 (MM) is important for host EIF2AK2 inhibition. The interval 269–384 (PDVFDGKCWL…IFRFGAHKWY (116 aa)) is PCP1-beta. In terms of domain architecture, Peptidase C32 spans 269–385 (PDVFDGKCWL…FRFGAHKWYG (117 aa)). Catalysis depends on for nsp1-beta papain-like cysteine proteinase activity residues Cys276 and His345. The OTU-like stretch occupies residues 418-505 (ITTYSPPTDG…GVHWEVEVRS (88 aa)). The region spanning 420–527 (TYSPPTDGSC…VGVCSEGCVA (108 aa)) is the Peptidase C33 domain. Active-site for nsp2 cysteine proteinase activity residues include Cys429 and His498. 2 disordered regions span residues 752 to 797 (PSDP…DAGA) and 1047 to 1088 (PPPK…SRVS). Over residues 775–790 (APASTTTLVREQTPDN) the composition is skewed to polar residues. A run of 3 helical transmembrane segments spans residues 1134–1154 (GSMA…LLLC), 1179–1199 (GVFG…SNPV), and 1252–1272 (WHVL…VYVV). The interval 1149-1272 (LALLLCRSYP…DLALSLVYVV (124 aa)) is HD1. Residues 1327–1351 (TGWRGCWRGESPIHQPHQKPIAYAN) form a WCCH region. Helical transmembrane passes span 1468–1488 (LAVA…LWFT), 1521–1541 (LCVS…QLSG), 1543–1563 (EVGI…RMAL), 1573–1593 (AFCA…PILL), and 1609–1629 (FLVF…GLLW). An HD2 region spans residues 1468–1629 (LAVAQVSAWT…LSLGITGLLW (162 aa)). The region spanning 1694–1896 (GAFRTHKPCL…SLLASVPVVE (203 aa)) is the Peptidase S32 domain. Residues His1732, Asp1757, and Ser1810 each act as charge relay system; for serine protease nsp4 activity in the active site. Transmembrane regions (helical) follow at residues 1919–1939 (WTPI…AVLV), 1943–1963 (FSFA…VLMI), 1977–1997 (LAFY…TFAG), and 2020–2040 (SCVP…LWLF). The HD3 stretch occupies residues 1919 to 2040 (WTPIVAVGFF…HTLGVILWLF (122 aa)). In terms of domain architecture, NiRAN spans 2381-2544 (IISQLQGLTT…LPYKLYPVRG (164 aa)). The region spanning 2783 to 2917 (GRCLEADLAS…YAERPTFPNY (135 aa)) is the RdRp catalytic domain. One can recognise an AV ZBD domain in the interval 3038–3101 (GKKFRHCGIC…SPVGAGRSPL (64 aa)). 12 residues coordinate Zn(2+): Cys3044, Cys3047, Cys3057, Cys3062, His3065, His3067, His3069, His3071, Cys3078, His3080, Cys3087, and Cys3090. The 160-residue stretch at 3151 to 3310 (DLSDGDYQVV…VFDQMPQKQL (160 aa)) folds into the (+)RNA virus helicase ATP-binding domain. 3186-3193 (GPPGSGKT) contacts ATP. A (+)RNA virus helicase C-terminal domain is found at 3311–3440 (TTIYRFGPNI…FSRGDELVVL (130 aa)). Residues 3479–3576 (EGSCMPLPQV…LTLYIRGEPQ (98 aa)) form the AV-Nsp11N/CoV-Nsp15M domain. Residues 3578–3700 (LPETLVSTGR…MVWKGATAYF (123 aa)) form the NendoU domain. Active-site residues include His3609, His3624, and Lys3653.

This sequence belongs to the arteriviridae polyprotein family. In terms of assembly, nsp1-alpha papain-like: Interacts with host RNF31. As to quaternary structure, interacts with host EIF2AK2; this interaction occurs in host stress granules and leads to EIF2AK2 inhibition. Interacts with host G3BP1; this interaction probably plays a role in Nsp1-beta-mediated inhibition of host EIF2AK2. Interacts with host DDX18; this interaction redistributes host DDX18 to the cytoplasm. In terms of assembly, interacts with host IFITM1. As to quaternary structure, interacts with host DDX5. Interacts with host OTULIN. In terms of assembly, interacts with host LGALS3. Post-translationally, specific enzymatic cleavages in vivo by its own proteases yield mature proteins. Nsp1 is autocleaved into two subunits, Nsp1-alpha and Nsp1-beta. There are two alternative pathways for processing. Either nsp4-5 is cleaved, which represents the major pathway or the nsp5-6 and nsp6-7 are processed, which represents the minor pathway. The major pathway occurs when nsp2 acts as a cofactor for nsp4.

It localises to the host nucleus. The protein resides in the host cytoplasm. The protein localises to the host membrane. Its subcellular location is the host endoplasmic reticulum. It is found in the host perinuclear region. The catalysed reaction is RNA(n) + a ribonucleoside 5'-triphosphate = RNA(n+1) + diphosphate. The enzyme catalyses ATP + H2O = ADP + phosphate + H(+). It carries out the reaction Thiol-dependent hydrolysis of ester, thioester, amide, peptide and isopeptide bonds formed by the C-terminal Gly of ubiquitin (a 76-residue protein attached to proteins as an intracellular targeting signal).. It catalyses the reaction uridylyl-uridylyl-ribonucleotide-RNA = a 3'-end uridylyl-2',3'-cyclophospho-uridine-RNA + a 5'-end dephospho-ribonucleoside-RNA. Its function is as follows. Contains the activities necessary for the transcription of negative stranded RNA, leader RNA, subgenomic mRNAs and progeny virion RNA as well as proteinases responsible for the cleavage of the polyprotein into functional products. Functionally, inhibits host IFN-beta production. Plays a role in the degradation of the host transcriptional activator CREBBP protein. The degradation of host CREBBP which is a key component of the IFN enhanceosome is likely responsible for the inhibition of interferon mediated by Nsp1-alpha. Also participates in the inhibition of host NF-kappa-B activation by counteracting LUBAC-dependent induction of NF-kappa-B. Reduces host NEMO ubiquitination by blocking the interaction between the two LUBAC complex components RNF31 and SHARPIN. Plays a role in blocking host mRNA nuclear export to the cytoplasm and subversion of host protein synthesis. Additionally, inhibits the interferon-activated JAK/STAT signal transduction by mediating the ubiquitination and subsequent proteasomal degradation of host KPNA1. Repurposes the host antiviral stress granules into a proviral platform to counteract the EIF2AK2/PKR restriction, thereby regulating the host inflammatory response. In terms of biological role, multifunctional protein that acts as a viral protease and as a viral antagonist of host immune response. Cleaves the nsp2/nsp3 site in the viral polyprotein. Displays deubiquitinating activity that cleaves both ubiquitinated and ISGylated products and therefore inhibits ubiquitin and ISG15-dependent host innate immunity. Also deubiquinates host NFKBIA, thereby interfering with NFKBIA degradation and impairing subsequent NF-kappa-B activation. Its function is as follows. Plays a role in the inhibition of the immune response by interacting with host IFITM1. This interaction leads to the proteasomal degradation of the IFN-induced antiviral protein IFITM1. Functionally, cleaves the majority of cleavage sites present in the C-terminus of the polyprotein. Triggers host apoptosis through caspase-3, -8, and -9 activations. Subverts host innate immune responses through its protease activity. Targets the NF-kappa-B essential modulator NEMO and mediates its cleavage. Blocks host interferon beta induction and downstream signaling by cleaving mitochondrial MAVS, dislodging it from the mitochondria. Impairs host defense by cleaving host mRNA-decapping enzyme DCP1A to attenuate its antiviral activity. Plays a role in the initial induction of autophagosomes from host endoplasmic reticulum. In terms of biological role, plays a role in the inhibition of host STAT3 signaling pathway by inducing the degradation of STAT3. Its function is as follows. Responsible for replication and transcription of the viral RNA genome. Functionally, displays RNA and DNA duplex-unwinding activities with 5' to 3' polarity. Plays a role in viral transcription/replication and prevents the simultaneous activation of host cell dsRNA sensors, such as MDA5/IFIH1, OAS, PKR and NLRP3 inflammasome. Acts by degrading the 5'-polyuridines generated during replication of the poly(A) region of viral genomic and subgenomic RNAs. Catalyzes a two-step reaction in which a 2'3'-cyclic phosphate (2'3'-cP) is first generated by 2'-O transesterification, which is then hydrolyzed to a 3'-phosphate (3'-P). If not degraded, poly(U) RNA would hybridize with poly(A) RNA tails and activate host dsRNA sensors. Also plays a role in the inhibition of host type I interferon production by recruiting host OTULIN to promote removal of linear ubiquitination targeting host NEMO. This Sus scrofa (Pig) protein is Replicase polyprotein 1ab (rep).